Here is a 264-residue protein sequence, read N- to C-terminus: MSCIIKTESEIKKMRISGKLAAEVLEMIKEHLQPKISTEDINQICHDYIVYKKKAISACLGYHGFPKSICISINDVVCHGIPSKNQVFKEGDIVNIDIAIIKDGYHGDTSKMFYIGKTSILSKRLCQVARESLYLSLKLVKPGIPLYKIGEIIQNYVESNNFSVVKEYCGHGIGRNFHEEPHVLHYKNKKNNIILKKGMIFTIEPMINSGNPEVKCMKDGWTVKTKDRSLSAQYEHTVLVTEYGCDILTWQKDEDISQKLVNIN.

Position 79 (His-79) interacts with substrate. Residues Asp-97, Asp-108, and His-171 each contribute to the a divalent metal cation site. His-178 provides a ligand contact to substrate. Residues Glu-204 and Glu-235 each coordinate a divalent metal cation.

The protein belongs to the peptidase M24A family. Methionine aminopeptidase type 1 subfamily. Monomer. Co(2+) serves as cofactor. The cofactor is Zn(2+). Requires Mn(2+) as cofactor. It depends on Fe(2+) as a cofactor.

The catalysed reaction is Release of N-terminal amino acids, preferentially methionine, from peptides and arylamides.. Its function is as follows. Removes the N-terminal methionine from nascent proteins. The N-terminal methionine is often cleaved when the second residue in the primary sequence is small and uncharged (Met-Ala-, Cys, Gly, Pro, Ser, Thr, or Val). Requires deformylation of the N(alpha)-formylated initiator methionine before it can be hydrolyzed. The protein is Methionine aminopeptidase of Buchnera aphidicola subsp. Acyrthosiphon pisum (strain APS) (Acyrthosiphon pisum symbiotic bacterium).